The following is a 380-amino-acid chain: uncharacterized protein (380 aa).

Residues Asn251–Leu275 are disordered. The span at Ser260–Pro272 shows a compositional bias: low complexity.

This is an uncharacterized protein from Allium cepa var. aggregatum (Shallot).